Reading from the N-terminus, the 960-residue chain is Putative helicase L207/L206 (960 aa).

Positions 1-32 are disordered; that stretch reads MTSKTENKKSVSSKTGRTTNNSTNKKTTEKSV. Residues 12–25 show a composition bias toward low complexity; sequence SSKTGRTTNNSTNK. The SF3 helicase domain occupies 646-807; it reads SMREYILTLL…FIKHSEATKK (162 aa).

The sequence is that of Putative helicase L207/L206 from Acanthamoeba polyphaga mimivirus (APMV).